A 368-amino-acid chain; its full sequence is 2-deoxy-scyllo-inosose synthase (368 aa).

NAD(+) contacts are provided by residues Asp-42, 72-75 (EEYK), 104-108 (GLTGN), 128-129 (TT), 139-141 (SIK), 150-151 (KN), and Gln-176. Lys-141 is an active-site residue. Glu-183 provides a ligand contact to Co(2+). Residue Glu-243 is part of the active site. The Co(2+) site is built by His-246 and His-262.

It belongs to the sugar phosphate cyclases superfamily. DOI synthase family. Was isolated as a heterodimeric enzyme comprising of BtrC and a smaller polypeptide further identified as PdxT by sequence homology. Homodimer in solution. The cofactor is NAD(+). Co(2+) is required as a cofactor.

The catalysed reaction is D-glucose 6-phosphate = 2-deoxy-L-scyllo-inosose + phosphate. It participates in metabolic intermediate biosynthesis; 2-deoxystreptamine biosynthesis; 2-deoxystreptamine from D-glucose 6-phosphate: step 1/4. The protein operates within antibiotic biosynthesis; butirosin biosynthesis. Its activity is regulated as follows. Strongly inhibited by EDTA, zinc and Cu(2+). Its function is as follows. Catalyzes the intramolecular carbocycle formation from D-glucose-6-phosphate to 2-deoxy-scyllo-inosose (DOI). The polypeptide is 2-deoxy-scyllo-inosose synthase (btrC) (Niallia circulans (Bacillus circulans)).